Here is a 724-residue protein sequence, read N- to C-terminus: Solute carrier organic anion transporter family member 4C1 (724 aa).

The Cytoplasmic portion of the chain corresponds to 1-105 (MKSAKGIENL…QCLQRCNTPG (105 aa)). Phosphoserine is present on residues serine 15, serine 16, serine 24, serine 26, and serine 28. The interval 24-71 (SASPSQVEVSALSSDPQRENSQPQELQKPQEPQKSPEPSLPSAPPNVS) is disordered. Positions 25–38 (ASPSQVEVSALSSD) are enriched in polar residues. Residues 44-60 (SQPQELQKPQEPQKSPE) show a composition bias toward low complexity. A helical transmembrane segment spans residues 106 to 126 (GFLLHYCLLAVTQGIVVNGLV). Residues 127 to 145 (NISISTIEKRYEMKSSLTG) are Extracellular-facing. A helical membrane pass occupies residues 146–166 (LISSSYDISFCLLSLFVSFFG). The Cytoplasmic portion of the chain corresponds to 167-172 (ERGHKP). A helical membrane pass occupies residues 173 to 197 (RWLAFAAFMIGLGALVFSLPQFFSG). The Extracellular portion of the chain corresponds to 198–224 (EYKLGSLFEDTCVTTRNSTSCTSSTSS). Residues 225–254 (LSNYLYVFILGQLLLGAGGTPLYTLGTAFL) traverse the membrane as a helical segment. Topologically, residues 255–274 (DDSVPTHKSSLYIGTGYAMS) are cytoplasmic. The helical transmembrane segment at 275–295 (ILGPAIGYVLGGQLLTIYVDV) threads the bilayer. The Extracellular portion of the chain corresponds to 296-311 (AMGESTDITEDDPRWL). The helical transmembrane segment at 312 to 336 (GAWWIGFLLSWIFAWSLIIPFSCFP) threads the bilayer. Residues 337-377 (KHLPGTAEIQAGKTSQAHQSNSNADAKFGKSIKDFPAALKN) lie on the Cytoplasmic side of the membrane. Residues 378-399 (LMKNAVFMCLVLSTSSEALITT) traverse the membrane as a helical segment. Residues 400 to 419 (GFATFLPKFIENQFGLTSSF) lie on the Extracellular side of the membrane. Residues 420–443 (AATLGGAVLIPGAALGQILGGFLV) traverse the membrane as a helical segment. Residues 444 to 447 (SKFK) are Cytoplasmic-facing. A helical transmembrane segment spans residues 448-471 (MTCKNTMKFALFTSGVALTLSFVF). Topologically, residues 472–580 (IYAKCGNEPF…ETHCAKLPIF (109 aa)) are extracellular. The 55-residue stretch at 495-549 (GNLIAPCNANCNCLRSYYYPVCGDGVQYFSPCFAGCSNSVAHRKPKVYYNCSCIE) folds into the Kazal-like domain. Intrachain disulfides connect cysteine 501-cysteine 530, cysteine 507-cysteine 526, and cysteine 516-cysteine 547. Residues 581 to 603 (LCIFFIVIIFTFMAGTPITVSIL) traverse the membrane as a helical segment. At 604 to 612 (RCVNHRQRS) the chain is on the cytoplasmic side. The chain crosses the membrane as a helical span at residues 613–638 (LALGIQFMVLRLLGTIPGPIIFGFTI). Over 639-672 (DSTCILWDINDCGIKGACRIYDNIKMAHMLVAIS) the chain is Extracellular. The helical transmembrane segment at 673–690 (VTCKVITMFFNGFAIFLY) threads the bilayer. Topologically, residues 691 to 724 (KPPPSATDLSFHKENAVVTNVLAEQDLNKIVKEG) are cytoplasmic.

It belongs to the organo anion transporter (TC 2.A.60) family.

The protein localises to the basolateral cell membrane. It carries out the reaction estrone 3-sulfate(out) = estrone 3-sulfate(in). The enzyme catalyses L-thyroxine(out) = L-thyroxine(in). It catalyses the reaction 3,3',5-triiodo-L-thyronine(out) = 3,3',5-triiodo-L-thyronine(in). The catalysed reaction is chenodeoxycholate(out) = chenodeoxycholate(in). It carries out the reaction glycocholate(out) = glycocholate(in). The enzyme catalyses L-homoarginine(in) = L-homoarginine(out). It catalyses the reaction L-arginine(in) = L-arginine(out). The catalysed reaction is N(omega),N(omega)-dimethyl-L-arginine(out) = N(omega),N(omega)-dimethyl-L-arginine(in). In terms of biological role, mediates the transport of organic anions such as steroids (estrone 3-sulfate, chenodeoxycholate, glycocholate) and thyroid hormones (3,3',5-triiodo-L-thyronine (T3), L-thyroxine (T4)), in the kidney. Capable of transporting cAMP and pharmacological substances such as digoxin, ouabain and methotrexate. Transport is independent of sodium, chloride ion, and ATP. Transport activity is stimulated by an acidic extracellular environment due to increased substrate affinity to the transporter. The driving force for this transport activity is currently not known. The role of hydrogencarbonate (HCO3(-), bicarbonate) as the probable counteranion that exchanges for organic anions is still not well defined. Functions as an uptake transporter at the apical membrane, suggesting a role in renal reabsorption. Involved in the renal secretion of the uremic toxin ADMA (N(omega),N(omega)-dimethyl-L-arginine or asymmetrical dimethylarginine), which is associated to cardiovascular events and mortality, and the structurally related amino acids L-arginine and L-homoarginine (a cardioprotective biomarker). Can act bidirectionally, suggesting a dual protective role of this transport protein; exporting L-homoarginine after being synthesized in proximal tubule cells, and mediating uptake of ADMA from the blood into proximal tubule cells where it is degraded by the enzyme dimethylarginine dimethylaminohydrolase 1 (DDAH1). May be involved in sperm maturation by enabling directed movement of organic anions and compounds within or between cells. This ion-transporting process is important to maintain the strict epididymal homeostasis necessary for sperm maturation. May have a role in secretory functions since seminal vesicle epithelial cells are assumed to secrete proteins involved in decapacitation by modifying surface proteins to facilitate the acquisition of the ability to fertilize the egg. In Pongo abelii (Sumatran orangutan), this protein is Solute carrier organic anion transporter family member 4C1.